The chain runs to 158 residues: 6,7-dimethyl-8-ribityllumazine synthase (158 aa).

5-amino-6-(D-ribitylamino)uracil-binding positions include Phe-22, 57–59, and 81–83; these read AVE and AVI. 86–87 contributes to the (2S)-2-hydroxy-3-oxobutyl phosphate binding site; sequence GT. His-89 acts as the Proton donor in catalysis. Residue Phe-114 participates in 5-amino-6-(D-ribitylamino)uracil binding. A (2S)-2-hydroxy-3-oxobutyl phosphate-binding site is contributed by Arg-128.

It belongs to the DMRL synthase family. In terms of assembly, forms an icosahedral capsid composed of 60 subunits, arranged as a dodecamer of pentamers.

It carries out the reaction (2S)-2-hydroxy-3-oxobutyl phosphate + 5-amino-6-(D-ribitylamino)uracil = 6,7-dimethyl-8-(1-D-ribityl)lumazine + phosphate + 2 H2O + H(+). Its pathway is cofactor biosynthesis; riboflavin biosynthesis; riboflavin from 2-hydroxy-3-oxobutyl phosphate and 5-amino-6-(D-ribitylamino)uracil: step 1/2. Functionally, catalyzes the formation of 6,7-dimethyl-8-ribityllumazine by condensation of 5-amino-6-(D-ribitylamino)uracil with 3,4-dihydroxy-2-butanone 4-phosphate. This is the penultimate step in the biosynthesis of riboflavin. The sequence is that of 6,7-dimethyl-8-ribityllumazine synthase from Shewanella oneidensis (strain ATCC 700550 / JCM 31522 / CIP 106686 / LMG 19005 / NCIMB 14063 / MR-1).